The sequence spans 359 residues: tRNA-specific 2-thiouridylase MnmA (359 aa).

Residues 10–17 (GISGGVDS) and leucine 36 contribute to the ATP site. The active-site Nucleophile is cysteine 101. A disulfide bridge connects residues cysteine 101 and cysteine 197. Glycine 125 contributes to the ATP binding site. The segment at 147–149 (KDQ) is interaction with tRNA. Cysteine 197 serves as the catalytic Cysteine persulfide intermediate. Residues 306 to 307 (RY) are interaction with tRNA.

It belongs to the MnmA/TRMU family.

The protein localises to the cytoplasm. The enzyme catalyses S-sulfanyl-L-cysteinyl-[protein] + uridine(34) in tRNA + AH2 + ATP = 2-thiouridine(34) in tRNA + L-cysteinyl-[protein] + A + AMP + diphosphate + H(+). In terms of biological role, catalyzes the 2-thiolation of uridine at the wobble position (U34) of tRNA, leading to the formation of s(2)U34. The protein is tRNA-specific 2-thiouridylase MnmA of Chlorobium chlorochromatii (strain CaD3).